Here is a 536-residue protein sequence, read N- to C-terminus: CTP synthase (536 aa).

The segment at 1–267 (MSKFVFVTGG…CKETLKYLDL (267 aa)) is amidoligase domain. Ser-13 serves as a coordination point for CTP. Ser-13 is a UTP binding site. Residues 14-19 (SIGKGI) and Asp-71 contribute to the ATP site. Residues Asp-71 and Glu-141 each contribute to the Mg(2+) site. CTP-binding positions include 148-150 (DIE), 188-193 (KTKPTQ), and Lys-224. UTP contacts are provided by residues 188 to 193 (KTKPTQ) and Lys-224. The 243-residue stretch at 292–534 (KVALVGKYIE…IKASQDKLTQ (243 aa)) folds into the Glutamine amidotransferase type-1 domain. L-glutamine is bound at residue Gly-354. Cys-381 functions as the Nucleophile; for glutamine hydrolysis in the catalytic mechanism. L-glutamine is bound by residues 382 to 385 (LGMQ), Glu-405, and Arg-462. Catalysis depends on residues His-507 and Glu-509.

It belongs to the CTP synthase family. In terms of assembly, homotetramer.

It carries out the reaction UTP + L-glutamine + ATP + H2O = CTP + L-glutamate + ADP + phosphate + 2 H(+). The catalysed reaction is L-glutamine + H2O = L-glutamate + NH4(+). It catalyses the reaction UTP + NH4(+) + ATP = CTP + ADP + phosphate + 2 H(+). The protein operates within pyrimidine metabolism; CTP biosynthesis via de novo pathway; CTP from UDP: step 2/2. With respect to regulation, allosterically activated by GTP, when glutamine is the substrate; GTP has no effect on the reaction when ammonia is the substrate. The allosteric effector GTP functions by stabilizing the protein conformation that binds the tetrahedral intermediate(s) formed during glutamine hydrolysis. Inhibited by the product CTP, via allosteric rather than competitive inhibition. In terms of biological role, catalyzes the ATP-dependent amination of UTP to CTP with either L-glutamine or ammonia as the source of nitrogen. Regulates intracellular CTP levels through interactions with the four ribonucleotide triphosphates. This is CTP synthase from Prochlorococcus marinus (strain AS9601).